A 492-amino-acid chain; its full sequence is Probable protein phosphatase 2C 33 (492 aa).

Residues 1–46 (MGSCLSAESRSPRPGSPCSPAFSVRKRKNSKKRPGSRNSSFDYRRE) are disordered. Basic residues predominate over residues 24-35 (VRKRKNSKKRPG). Residues 64 to 393 (VACIYTQQGK…DDCAAVCLYL (330 aa)) enclose the PPM-type phosphatase domain. The Mn(2+) site is built by Asp-100, Gly-101, Asp-338, and Asp-384. A disordered region spans residues 406–468 (SISKLEDGEE…ADNLDSEPGT (63 aa)). The span at 412–427 (DGEEEELKATTEDDDA) shows a compositional bias: acidic residues. Positions 441 to 460 (SGKEIALDESETEKLIKEAD) are enriched in basic and acidic residues.

Belongs to the PP2C family. Mg(2+) serves as cofactor. The cofactor is Mn(2+).

It carries out the reaction O-phospho-L-seryl-[protein] + H2O = L-seryl-[protein] + phosphate. It catalyses the reaction O-phospho-L-threonyl-[protein] + H2O = L-threonyl-[protein] + phosphate. The polypeptide is Probable protein phosphatase 2C 33 (PPC6-1) (Arabidopsis thaliana (Mouse-ear cress)).